The sequence spans 144 residues: Transcriptional regulator SlyA (144 aa).

The 134-residue stretch at 2–135 (ESPLGSDLAR…LITLIAKLEH (134 aa)) folds into the HTH marR-type domain. Positions 49 to 72 (QIQLAKAIGIEQPSLVRTLDQLEE) form a DNA-binding region, H-T-H motif.

This sequence belongs to the SlyA family. In terms of assembly, homodimer.

In terms of biological role, transcription regulator that can specifically activate or repress expression of target genes. This is Transcriptional regulator SlyA from Escherichia coli (strain 55989 / EAEC).